The primary structure comprises 332 residues: Melanocortin receptor 4 (332 aa).

Over 1 to 43 (MNSTHHHGMYTSLHLWNRSSYGLHGNASESLGKGHPDGGCYEQ) the chain is Extracellular. Asn-2, Asn-17, and Asn-26 each carry an N-linked (GlcNAc...) asparagine glycan. Intrachain disulfides connect Cys-40–Cys-279 and Cys-271–Cys-277. The helical transmembrane segment at 44–69 (LFVSPEVFVTLGVISLLENILVIVAI) threads the bilayer. Residues 70–81 (AKNKNLHSPMYF) lie on the Cytoplasmic side of the membrane. The helical transmembrane segment at 82-106 (FICSLAVADMLVSVSNGSETIVITL) threads the bilayer. Glu-100 serves as a coordination point for Ca(2+). Residues 107–123 (LNSTDTDAQSFTVNIDN) are Extracellular-facing. An N-linked (GlcNAc...) asparagine glycan is attached at Asn-108. Ca(2+) contacts are provided by Asp-122 and Asp-126. The helical transmembrane segment at 124-145 (VIDSVICSSLLASICSLLSIAV) threads the bilayer. The Cytoplasmic portion of the chain corresponds to 146-165 (DRYFTIFYALQYHNIMTVRR). The helical transmembrane segment at 166 to 186 (VGIIISCIWAACTVSGVLFII) threads the bilayer. Over 187 to 191 (YSDSS) the chain is Extracellular. A helical membrane pass occupies residues 192–215 (AVIICLISMFFTMLVLMASLYVHM). Residues 216-248 (FLMARLHIKRIAVLPGTGTIRQGTNMKGAITLT) lie on the Cytoplasmic side of the membrane. A helical membrane pass occupies residues 249 to 271 (ILIGVFVVCWAPFFLHLLFYISC). Residues 272 to 280 (PQNPYCVCF) lie on the Extracellular side of the membrane. Residues 281 to 304 (MSHFNLYLILIMCNAVIDPLIYAL) traverse the membrane as a helical segment. The Cytoplasmic portion of the chain corresponds to 305–332 (RSQELRKTFKEIICFYPLGGICELSSRY). Cys-318 carries S-palmitoyl cysteine lipidation.

Belongs to the G-protein coupled receptor 1 family. Homodimer; disulfide-linked, also forms higher order oligomers. Interacts with GNAS. Interacts with ATRNL1. Interacts with MGRN1; this interaction competes with GNAS-binding and thus inhibits agonist-induced cAMP production. Interacts with MRAP and MRAP2; these associated factors increase ligand-sensitivity and generation of cAMP.

It localises to the cell membrane. In terms of biological role, hormone receptor that acts as a key component of the leptin-melanocortin pathway at the intersection of homeostatic maintenance of energetic state. Plays a role in regulating food intake: activation by a stimulating hormone such as anorexigenic alpha-melanocyte stimulating hormone (alpha-MSH) inhibits appetite, whereas binding to a natural antagonist like Agouti-related protein/AGRP promotes appetite. G-protein-coupled receptor that activates conventional Galphas signaling leading to induction of anorexogenic signaling in the hypothalamus to result in negative energy balance. Regulates the firing activity of neurons from the hypothalamus by alpha-MSH and AGRP independently of Galphas signaling by ligand-induced coupling of closure of inwardly rectifying potassium channel KCNJ13. In intestinal epithelial cells, plays a role in the inhibition of hepatic glucose production via nesfatin-1/NUCB2 leading to increased cyclic adenosine monophosphate (cAMP) levels and glucagon-like peptide 1 (GLP-1) secretion in the intestinal epithelium. This Mus musculus (Mouse) protein is Melanocortin receptor 4 (Mc4r).